We begin with the raw amino-acid sequence, 252 residues long: Chitooligosaccharide deacetylase (252 aa).

His61 and His125 together coordinate Mg(2+).

This sequence belongs to the YdjC deacetylase family. ChbG subfamily. Homodimer. The cofactor is Mg(2+).

It is found in the cytoplasm. It catalyses the reaction N,N'-diacetylchitobiose + H2O = N-acetyl-beta-D-glucosaminyl-(1-&gt;4)-D-glucosamine + acetate. It carries out the reaction diacetylchitobiose-6'-phosphate + H2O = N'-monoacetylchitobiose-6'-phosphate + acetate. The protein operates within glycan degradation; chitin degradation. Involved in the degradation of chitin. ChbG is essential for growth on the acetylated chitooligosaccharides chitobiose and chitotriose but is dispensable for growth on cellobiose and chitosan dimer, the deacetylated form of chitobiose. Deacetylation of chitobiose-6-P and chitotriose-6-P is necessary for both the activation of the chb promoter by the regulatory protein ChbR and the hydrolysis of phosphorylated beta-glucosides by the phospho-beta-glucosidase ChbF. Catalyzes the removal of only one acetyl group from chitobiose-6-P to yield monoacetylchitobiose-6-P, the inducer of ChbR and the substrate of ChbF. This chain is Chitooligosaccharide deacetylase, found in Escherichia coli O139:H28 (strain E24377A / ETEC).